The following is a 102-amino-acid chain: uncharacterized protein (102 aa).

A helical transmembrane segment spans residues 29–52 (IGSTYFCFGGAIFILVAPLTNLVY).

It localises to the membrane. This is an uncharacterized protein from Saccharomyces cerevisiae (strain ATCC 204508 / S288c) (Baker's yeast).